Reading from the N-terminus, the 198-residue chain is Ribonuclease HII (198 aa).

The region spanning 11–198 (NLIAGVDEVG…GPVKRVLGLV (188 aa)) is the RNase H type-2 domain. A divalent metal cation-binding residues include Asp-17, Glu-18, and Asp-109.

The protein belongs to the RNase HII family. Requires Mn(2+) as cofactor. It depends on Mg(2+) as a cofactor.

It localises to the cytoplasm. The enzyme catalyses Endonucleolytic cleavage to 5'-phosphomonoester.. Functionally, endonuclease that specifically degrades the RNA of RNA-DNA hybrids. The chain is Ribonuclease HII from Yersinia pseudotuberculosis serotype O:1b (strain IP 31758).